The sequence spans 478 residues: Protein FAM83E (478 aa).

Residues 1-293 (MAASQLAALE…LYAASCPLPP (293 aa)) form a DUF1669 region. Disordered regions lie at residues 292-334 (PPAP…PLAH), 359-436 (RART…LPPA), and 452-478 (DATF…GGQP). Over residues 309–319 (RSPHRVSRRRS) the composition is skewed to basic residues. Positions 379–388 (RLSQLSGSSD) are enriched in polar residues.

The protein belongs to the FAM83 family. As to quaternary structure, directly interacts (via DUF1669) with CSNK1A1, CSNK1A1L, CSNK1D and CSNK1E. May interact with RAF1.

Its subcellular location is the cytoplasm. The protein localises to the perinuclear region. Its function is as follows. May play a role in MAPK signaling. This is Protein FAM83E from Homo sapiens (Human).